Here is a 142-residue protein sequence, read N- to C-terminus: Large ribosomal subunit protein uL13 (142 aa).

Belongs to the universal ribosomal protein uL13 family. As to quaternary structure, part of the 50S ribosomal subunit.

Its function is as follows. This protein is one of the early assembly proteins of the 50S ribosomal subunit, although it is not seen to bind rRNA by itself. It is important during the early stages of 50S assembly. This Polaromonas sp. (strain JS666 / ATCC BAA-500) protein is Large ribosomal subunit protein uL13.